The sequence spans 470 residues: Ribulose bisphosphate carboxylase large chain (470 aa).

Positions 118 and 168 each coordinate substrate. Lys-170 acts as the Proton acceptor in catalysis. Position 172 (Lys-172) interacts with substrate. Residues Lys-196, Asp-198, and Glu-199 each contribute to the Mg(2+) site. Position 196 is an N6-carboxylysine (Lys-196). His-289 acts as the Proton acceptor in catalysis. Residues Arg-290, His-322, and Ser-374 each contribute to the substrate site. Positions 459-465 (EIKFEFD) match the Interacts with RbcX2 motif.

The protein belongs to the RuBisCO large chain family. Type I subfamily. As to quaternary structure, heterohexadecamer of 8 large chains and 8 small chains; disulfide-linked. The disulfide link is formed within the large subunit homodimers. Mg(2+) serves as cofactor. Post-translationally, the disulfide bond which can form in the large chain dimeric partners within the hexadecamer appears to be associated with oxidative stress and protein turnover.

The protein localises to the carboxysome. The catalysed reaction is 2 (2R)-3-phosphoglycerate + 2 H(+) = D-ribulose 1,5-bisphosphate + CO2 + H2O. It catalyses the reaction D-ribulose 1,5-bisphosphate + O2 = 2-phosphoglycolate + (2R)-3-phosphoglycerate + 2 H(+). Its function is as follows. RuBisCO catalyzes two reactions: the carboxylation of D-ribulose 1,5-bisphosphate, the primary event in carbon dioxide fixation, as well as the oxidative fragmentation of the pentose substrate in the photorespiration process. Both reactions occur simultaneously and in competition at the same active site. The polypeptide is Ribulose bisphosphate carboxylase large chain (Picosynechococcus sp. (strain ATCC 27264 / PCC 7002 / PR-6) (Agmenellum quadruplicatum)).